We begin with the raw amino-acid sequence, 109 residues long: Putative membrane protein insertion efficiency factor (109 aa).

Belongs to the UPF0161 family.

It is found in the cell inner membrane. Could be involved in insertion of integral membrane proteins into the membrane. The protein is Putative membrane protein insertion efficiency factor of Rhodopseudomonas palustris (strain BisA53).